The primary structure comprises 449 residues: Putative recombination initiation defects 3 (449 aa).

The segment at 21 to 56 is disordered; it reads LRRSAEPQASQQLRSQQSQQSFSQGPSSSQRGCGGF. The span at 28-50 shows a compositional bias: low complexity; that stretch reads QASQQLRSQQSQQSFSQGPSSSQ. Residues 437–441 carry the Nuclear localization signal motif; sequence RTKRK.

As to quaternary structure, interacts with PRD1; this interaction facilitates a binding to DFO.

It localises to the nucleus. Functionally, involved in DNA cleavage that forms the double-strand breaks (DSB) that initiate meiotic recombination. The protein is Putative recombination initiation defects 3 of Arabidopsis thaliana (Mouse-ear cress).